A 238-amino-acid polypeptide reads, in one-letter code: 3-deoxy-D-manno-octulosonic acid kinase (238 aa).

Asp167 is an active-site residue.

The protein belongs to the protein kinase superfamily. KdkA/RfaP family.

The protein localises to the cell inner membrane. It catalyses the reaction an alpha-Kdo-(2-&gt;6)-lipid IVA + ATP = a 4-O-phospho-alpha-Kdo-(2-&gt;6)-lipid IVA + ADP + H(+). Its pathway is bacterial outer membrane biogenesis; LPS core biosynthesis. Functionally, catalyzes the ATP-dependent phosphorylation of the 3-deoxy-D-manno-octulosonic acid (Kdo) residue in Kdo-lipid IV(A) at the 4-OH position. This chain is 3-deoxy-D-manno-octulosonic acid kinase, found in Vibrio parahaemolyticus serotype O3:K6 (strain RIMD 2210633).